We begin with the raw amino-acid sequence, 346 residues long: tRNA N6-adenosine threonylcarbamoyltransferase (346 aa).

Fe cation contacts are provided by His-117 and His-121. Substrate-binding positions include 139–143, Asp-172, Gly-185, Asp-189, and Asn-278; that span reads QVSGG. A Fe cation-binding site is contributed by Asp-308.

This sequence belongs to the KAE1 / TsaD family. Fe(2+) serves as cofactor.

The protein localises to the cytoplasm. The enzyme catalyses L-threonylcarbamoyladenylate + adenosine(37) in tRNA = N(6)-L-threonylcarbamoyladenosine(37) in tRNA + AMP + H(+). Its function is as follows. Required for the formation of a threonylcarbamoyl group on adenosine at position 37 (t(6)A37) in tRNAs that read codons beginning with adenine. Is involved in the transfer of the threonylcarbamoyl moiety of threonylcarbamoyl-AMP (TC-AMP) to the N6 group of A37, together with TsaE and TsaB. TsaD likely plays a direct catalytic role in this reaction. In Lactobacillus delbrueckii subsp. bulgaricus (strain ATCC 11842 / DSM 20081 / BCRC 10696 / JCM 1002 / NBRC 13953 / NCIMB 11778 / NCTC 12712 / WDCM 00102 / Lb 14), this protein is tRNA N6-adenosine threonylcarbamoyltransferase.